The sequence spans 535 residues: MSVTTFCSLKKTDKCNIYISKRAFSVFLFYLFFFLFFHFYFLCSSSFAVIIHESEKRKNIMRRKRSILQIFENSIKSKEGKCNFTKRYITHYYNIPLKIKKHDLPSVIKYFSHKPNGKHNYVTNMITQKNRKSFLFFFFLYNKYFFGKQEQIRKMNYHEEMNKINIKNDGNRKIYMYPKNDIHEEDGDHKNDVEINQKRNEQNCKSFNDEKNENARDPNKILYLINPRGFCKGVSRAIETVEECLKLFKPPIYVKHKIVHNDIVCKKLEKEGAIFIEDLNDVPDGHILIYSAHGISPQIREIAKKKKLIEIDATCPLVNKVHVYVQMKAKENYDIILIGYKNHVEVIGTYNEAPHCTHIVENVNDVDKLNFPLNKKLFYVTQTTLSMDDCALIVQKLKNKFPHIETIPSGSICYATTNRQTALNKICTKCDLTIVVGSSSSSNAKKLVYSSQIRNVPAVLLNTVHDLDQQILKNVNKIALTSAASTPEQETQKFVNLLTNPPFNYTLQNFDGAHENVPKWKLPKNLLHMIKEREK.

Cys-231 is a [4Fe-4S] cluster binding site. Residues His-260 and His-293 each coordinate (2E)-4-hydroxy-3-methylbut-2-enyl diphosphate. The dimethylallyl diphosphate site is built by His-260 and His-293. The isopentenyl diphosphate site is built by His-260 and His-293. [4Fe-4S] cluster is bound at residue Cys-315. His-343 provides a ligand contact to (2E)-4-hydroxy-3-methylbut-2-enyl diphosphate. His-343 is a binding site for dimethylallyl diphosphate. Residue His-343 participates in isopentenyl diphosphate binding. The active-site Proton donor is Glu-345. Thr-383 contributes to the (2E)-4-hydroxy-3-methylbut-2-enyl diphosphate binding site. Position 413 (Cys-413) interacts with [4Fe-4S] cluster. 4 residues coordinate (2E)-4-hydroxy-3-methylbut-2-enyl diphosphate: Ser-441, Ser-442, Asn-443, and Ser-485. Dimethylallyl diphosphate is bound by residues Ser-441, Ser-442, Asn-443, and Ser-485. Positions 441, 442, 443, and 485 each coordinate isopentenyl diphosphate.

The protein belongs to the IspH family. As to quaternary structure, interacts with Fd/ferredoxin. [4Fe-4S] cluster serves as cofactor.

The protein localises to the plastid. It localises to the apicoplast. The catalysed reaction is dimethylallyl diphosphate + 2 oxidized [2Fe-2S]-[ferredoxin] + H2O = (2E)-4-hydroxy-3-methylbut-2-enyl diphosphate + 2 reduced [2Fe-2S]-[ferredoxin] + 2 H(+). It catalyses the reaction isopentenyl diphosphate + 2 oxidized [2Fe-2S]-[ferredoxin] + H2O = (2E)-4-hydroxy-3-methylbut-2-enyl diphosphate + 2 reduced [2Fe-2S]-[ferredoxin] + 2 H(+). It participates in isoprenoid biosynthesis; dimethylallyl diphosphate biosynthesis; dimethylallyl diphosphate from (2E)-4-hydroxy-3-methylbutenyl diphosphate: step 1/1. It functions in the pathway isoprenoid biosynthesis; isopentenyl diphosphate biosynthesis via DXP pathway; isopentenyl diphosphate from 1-deoxy-D-xylulose 5-phosphate: step 6/6. Functionally, catalyzes the conversion of 1-hydroxy-2-methyl-2-(E)-butenyl 4-diphosphate (HMBPP) into a mixture of isopentenyl diphosphate (IPP) and dimethylallyl diphosphate (DMAPP). Acts in the terminal step of the DOXP/MEP pathway for isoprenoid precursor biosynthesis. The protein is 4-hydroxy-3-methylbut-2-enyl diphosphate reductase, apicoplast of Plasmodium falciparum (isolate 3D7).